A 451-amino-acid polypeptide reads, in one-letter code: Tol-Pal system protein TolB 1 (451 aa).

The N-terminal stretch at 1-19 is a signal peptide; that stretch reads MTLRMLFAFALLAAAPAQA. Over residues 18 to 29 the composition is skewed to low complexity; the sequence is QAQQTEPQPAEE. Disordered stretches follow at residues 18–37 and 431–451; these read QAQQ…GTVS and NERR…PLLP.

It belongs to the TolB family. In terms of assembly, the Tol-Pal system is composed of five core proteins: the inner membrane proteins TolA, TolQ and TolR, the periplasmic protein TolB and the outer membrane protein Pal. They form a network linking the inner and outer membranes and the peptidoglycan layer.

The protein localises to the periplasm. Functionally, part of the Tol-Pal system, which plays a role in outer membrane invagination during cell division and is important for maintaining outer membrane integrity. This chain is Tol-Pal system protein TolB 1, found in Novosphingobium aromaticivorans (strain ATCC 700278 / DSM 12444 / CCUG 56034 / CIP 105152 / NBRC 16084 / F199).